Here is a 515-residue protein sequence, read N- to C-terminus: 2-isopropylmalate synthase (515 aa).

Residues 4-264 (VKIFDTTLRD…NIGINQDTTQ (261 aa)) form the Pyruvate carboxyltransferase domain. 4 residues coordinate Mn(2+): Asp13, His201, His203, and Asn237. Residues 390-515 (ELDYLSVNTG…RQTTSAQEGI (126 aa)) are regulatory domain.

Belongs to the alpha-IPM synthase/homocitrate synthase family. LeuA type 1 subfamily. In terms of assembly, homodimer. It depends on Mn(2+) as a cofactor.

It localises to the cytoplasm. The enzyme catalyses 3-methyl-2-oxobutanoate + acetyl-CoA + H2O = (2S)-2-isopropylmalate + CoA + H(+). Its pathway is amino-acid biosynthesis; L-leucine biosynthesis; L-leucine from 3-methyl-2-oxobutanoate: step 1/4. Functionally, catalyzes the condensation of the acetyl group of acetyl-CoA with 3-methyl-2-oxobutanoate (2-ketoisovalerate) to form 3-carboxy-3-hydroxy-4-methylpentanoate (2-isopropylmalate). The chain is 2-isopropylmalate synthase from Halothermothrix orenii (strain H 168 / OCM 544 / DSM 9562).